The following is a 208-amino-acid chain: Peptidyl-tRNA hydrolase (208 aa).

Tyrosine 19 is a tRNA binding site. Catalysis depends on histidine 24, which acts as the Proton acceptor. Residues phenylalanine 71, asparagine 73, and asparagine 119 each coordinate tRNA.

This sequence belongs to the PTH family. Monomer.

It is found in the cytoplasm. The catalysed reaction is an N-acyl-L-alpha-aminoacyl-tRNA + H2O = an N-acyl-L-amino acid + a tRNA + H(+). Its function is as follows. Hydrolyzes ribosome-free peptidyl-tRNAs (with 1 or more amino acids incorporated), which drop off the ribosome during protein synthesis, or as a result of ribosome stalling. Functionally, catalyzes the release of premature peptidyl moieties from peptidyl-tRNA molecules trapped in stalled 50S ribosomal subunits, and thus maintains levels of free tRNAs and 50S ribosomes. The chain is Peptidyl-tRNA hydrolase from Synechococcus elongatus (strain ATCC 33912 / PCC 7942 / FACHB-805) (Anacystis nidulans R2).